The chain runs to 510 residues: Catalase (510 aa).

The first 26 residues, Met-1–Ala-26, serve as a signal peptide directing secretion. Catalysis depends on residues His-78 and Asn-150. Tyr-358 contacts heme. Residues Asn-386–Val-400 show a composition bias toward polar residues. Positions Asn-386–Ala-412 are disordered.

The protein belongs to the catalase family. Heme serves as cofactor.

It is found in the periplasm. It catalyses the reaction 2 H2O2 = O2 + 2 H2O. Its function is as follows. Decomposes hydrogen peroxide into water and oxygen; serves to protect cells from the toxic effects of hydrogen peroxide. The sequence is that of Catalase (katB) from Pseudomonas syringae pv. syringae.